The following is a 512-amino-acid chain: ATP synthase subunit alpha (512 aa).

Position 169–176 (169–176 (GDRQTGKT)) interacts with ATP.

It belongs to the ATPase alpha/beta chains family. F-type ATPases have 2 components, CF(1) - the catalytic core - and CF(0) - the membrane proton channel. CF(1) has five subunits: alpha(3), beta(3), gamma(1), delta(1), epsilon(1). CF(0) has three main subunits: a(1), b(2) and c(9-12). The alpha and beta chains form an alternating ring which encloses part of the gamma chain. CF(1) is attached to CF(0) by a central stalk formed by the gamma and epsilon chains, while a peripheral stalk is formed by the delta and b chains.

The protein localises to the cell inner membrane. It carries out the reaction ATP + H2O + 4 H(+)(in) = ADP + phosphate + 5 H(+)(out). Produces ATP from ADP in the presence of a proton gradient across the membrane. The alpha chain is a regulatory subunit. This is ATP synthase subunit alpha from Aromatoleum aromaticum (strain DSM 19018 / LMG 30748 / EbN1) (Azoarcus sp. (strain EbN1)).